We begin with the raw amino-acid sequence, 201 residues long: 3-isopropylmalate dehydratase small subunit (201 aa).

It belongs to the LeuD family. LeuD type 1 subfamily. As to quaternary structure, heterodimer of LeuC and LeuD.

It carries out the reaction (2R,3S)-3-isopropylmalate = (2S)-2-isopropylmalate. It participates in amino-acid biosynthesis; L-leucine biosynthesis; L-leucine from 3-methyl-2-oxobutanoate: step 2/4. Catalyzes the isomerization between 2-isopropylmalate and 3-isopropylmalate, via the formation of 2-isopropylmaleate. The protein is 3-isopropylmalate dehydratase small subunit of Ruegeria pomeroyi (strain ATCC 700808 / DSM 15171 / DSS-3) (Silicibacter pomeroyi).